A 151-amino-acid polypeptide reads, in one-letter code: Deoxyuridine 5'-triphosphate nucleotidohydrolase (151 aa).

Substrate is bound by residues 70 to 72, Asn-83, 87 to 89, and Met-97; these read RSG and LID.

The protein belongs to the dUTPase family. The cofactor is Mg(2+).

The catalysed reaction is dUTP + H2O = dUMP + diphosphate + H(+). The protein operates within pyrimidine metabolism; dUMP biosynthesis; dUMP from dCTP (dUTP route): step 2/2. Functionally, this enzyme is involved in nucleotide metabolism: it produces dUMP, the immediate precursor of thymidine nucleotides and it decreases the intracellular concentration of dUTP so that uracil cannot be incorporated into DNA. The chain is Deoxyuridine 5'-triphosphate nucleotidohydrolase from Shigella flexneri serotype 5b (strain 8401).